Consider the following 453-residue polypeptide: Cobyrinate a,c-diamide synthase (453 aa).

The region spanning 250 to 440 (RIAVPFDEAF…IHTHTACLPD (191 aa)) is the GATase cobBQ-type domain. The Nucleophile role is filled by C332.

Belongs to the CobB/CbiA family. It depends on Mg(2+) as a cofactor.

It carries out the reaction cob(II)yrinate + 2 L-glutamine + 2 ATP + 2 H2O = cob(II)yrinate a,c diamide + 2 L-glutamate + 2 ADP + 2 phosphate + 2 H(+). The enzyme catalyses Ni-sirohydrochlorin + 2 L-glutamine + 2 ATP + 2 H2O = Ni-sirohydrochlorin a,c-diamide + 2 L-glutamate + 2 ADP + 2 phosphate + 2 H(+). It participates in cofactor biosynthesis; adenosylcobalamin biosynthesis; cob(II)yrinate a,c-diamide from sirohydrochlorin (anaerobic route): step 10/10. Catalyzes the ATP-dependent amidation of the two carboxylate groups at positions a and c of cobyrinate, using either L-glutamine or ammonia as the nitrogen source. Involved in the biosynthesis of the unique nickel-containing tetrapyrrole coenzyme F430, the prosthetic group of methyl-coenzyme M reductase (MCR), which plays a key role in methanogenesis and anaerobic methane oxidation. Catalyzes the ATP-dependent amidation of the two carboxylate groups at positions a and c of Ni-sirohydrochlorin, using L-glutamine or ammonia as the nitrogen source. The chain is Cobyrinate a,c-diamide synthase from Methanosphaera stadtmanae (strain ATCC 43021 / DSM 3091 / JCM 11832 / MCB-3).